Reading from the N-terminus, the 160-residue chain is Cytochrome b6-f complex subunit 4 (160 aa).

The next 3 membrane-spanning stretches (helical) occupy residues 36 to 56 (LLYI…GLAV), 95 to 115 (LLGV…PFLE), and 131 to 151 (TVFL…TLPI).

Belongs to the cytochrome b family. PetD subfamily. The 4 large subunits of the cytochrome b6-f complex are cytochrome b6, subunit IV (17 kDa polypeptide, petD), cytochrome f and the Rieske protein, while the 4 small subunits are petG, petL, petM and petN. The complex functions as a dimer.

It localises to the plastid. It is found in the chloroplast thylakoid membrane. Its function is as follows. Component of the cytochrome b6-f complex, which mediates electron transfer between photosystem II (PSII) and photosystem I (PSI), cyclic electron flow around PSI, and state transitions. The sequence is that of Cytochrome b6-f complex subunit 4 from Spinacia oleracea (Spinach).